Consider the following 151-residue polypeptide: Actin-depolymerizing factor 10 (151 aa).

The region spanning 15-149 (PAWIEVPEKS…DLEVLRGRAN (135 aa)) is the ADF-H domain.

Belongs to the actin-binding proteins ADF family.

Functionally, actin-depolymerizing protein. Severs actin filaments (F-actin) and binds to actin monomers. The protein is Actin-depolymerizing factor 10 (ADF10) of Oryza sativa subsp. japonica (Rice).